A 126-amino-acid chain; its full sequence is Large ribosomal subunit protein bL12 (126 aa).

Belongs to the bacterial ribosomal protein bL12 family. Homodimer. Part of the ribosomal stalk of the 50S ribosomal subunit. Forms a multimeric L10(L12)X complex, where L10 forms an elongated spine to which 2 to 4 L12 dimers bind in a sequential fashion. Binds GTP-bound translation factors.

Its function is as follows. Forms part of the ribosomal stalk which helps the ribosome interact with GTP-bound translation factors. Is thus essential for accurate translation. This chain is Large ribosomal subunit protein bL12, found in Acidovorax sp. (strain JS42).